The primary structure comprises 302 residues: MYWFKNAMIYKLTKELDWSEDKLQQNLAQCAYHPCGQSDMSKFGWTTPLRGAELFCFSVGKQILLVAHKEEKIIPAHVIKRELDNRINELEEKENRKLKKTEKQALKDDVVSVLLPRAFSKNQQTAIWIDTEKNLIYVDAASSKRAEDVLALLRKSLGSLPVVPLAFANEPSMVMTDWIIKNDMPQWLVPLEEAELKAADDRGIIRCKNQALDSEEMISHLQAGKFVTKLALEWEEHLTFVLNDDGTLKRLKFADMIREKNDDILKEDFAQRFDADFILMTGELAKLTENLIEHFGGEKNRL.

This sequence belongs to the RdgC family.

Its subcellular location is the cytoplasm. The protein resides in the nucleoid. Functionally, may be involved in recombination. This is Recombination-associated protein RdgC from Mannheimia succiniciproducens (strain KCTC 0769BP / MBEL55E).